The following is a 2476-amino-acid chain: Non-reducing polyketide synthase ausA (2476 aa).

The segment at 14–253 (VLFGPKYPEV…HHSNHTQAVE (240 aa)) is N-terminal acylcarrier protein transacylase domain (SAT). The Ketosynthase family 3 (KS3) domain occupies 379–795 (AVPIAVTGMA…GSNAAIVLRE (417 aa)). Catalysis depends on for beta-ketoacyl synthase activity residues Cys-544, His-679, and His-718. The malonyl-CoA:ACP transacylase (MAT) domain stretch occupies residues 906–1210 (ICFGGQTGDT…LPTDLSGAQA (305 aa)). The active-site For acyl/malonyl transferase activity is Ser-993. The interval 1277–1405 (QEASLVRLLR…GRVSLQAAGS (129 aa)) is N-terminal hotdog fold. Residues 1277-1584 (QEASLVRLLR…FTGVSIQSLK (308 aa)) enclose the PKS/mFAS DH domain. The tract at residues 1280–1583 (SLVRLLRQDG…TFTGVSIQSL (304 aa)) is product template (PT) domain. His-1310 serves as the catalytic Proton acceptor; for dehydratase activity. Positions 1433-1584 (SSSGLKRSTV…FTGVSIQSLK (152 aa)) are C-terminal hotdog fold. Asp-1491 (proton donor; for dehydratase activity) is an active-site residue. Residues 1626–1700 (DGDLLAVQTM…GLVQRIFPGH (75 aa)) form the Carrier domain. Ser-1660 carries the O-(pantetheine 4'-phosphoryl)serine modification. Residues 1862–2095 (QHASEHKLLH…GFNWVDWTDN (234 aa)) form a methyltransferase (CMeT) domain region. Residues 2128–2476 (NTVQEQTVLY…YEFLRRHVGL (349 aa)) are thioesterase (TE) domain. Catalysis depends on for thioesterase activity residues Ser-2251, Asp-2413, and His-2445.

The enzyme catalyses 3 malonyl-CoA + acetyl-CoA + 2 S-adenosyl-L-methionine = 3,5-dimethylorsellinate + 2 S-adenosyl-L-homocysteine + 3 CO2 + 4 CoA. Its pathway is secondary metabolite biosynthesis; terpenoid biosynthesis. Its function is as follows. Non-reducing polyketide synthase; part of the gene cluster A that mediates the biosynthesis of austinol and dehydroaustinol, two fungal meroterpenoids. The first step of the pathway is the synthesis of 3,5-dimethylorsellinic acid by the polyketide synthase ausA. 3,5-dimethylorsellinic acid is then prenylated by the polyprenyl transferase ausN. Further epoxidation by the FAD-dependent monooxygenase ausM and cyclization by the probable terpene cyclase ausL lead to the formation of protoaustinoid A. Protoaustinoid A is then oxidized to spiro-lactone preaustinoid A3 by the combined action of the FAD-binding monooxygenases ausB and ausC, and the dioxygenase ausE. Acid-catalyzed keto-rearrangement and ring contraction of the tetraketide portion of preaustinoid A3 by ausJ lead to the formation of preaustinoid A4. The aldo-keto reductase ausK, with the help of ausH, is involved in the next step by transforming preaustinoid A4 into isoaustinone which is in turn hydroxylated by the P450 monooxygenase ausI to form austinolide. Finally, the cytochrome P450 monooxygenase ausG modifies austinolide to austinol. Austinol can be further modified to dehydroaustinol which forms a diffusible complex with diorcinol that initiates conidiation. Due to genetic rearrangements of the clusters and the subsequent loss of some enzymes, the end products of the Emericella nidulans austinoid biosynthesis clusters are austinol and dehydroaustinol, even if additional enzymes, such as the O-acetyltransferase ausQ and the cytochrome P450 monooxygenase ausR are still functional. This chain is Non-reducing polyketide synthase ausA, found in Emericella nidulans (strain FGSC A4 / ATCC 38163 / CBS 112.46 / NRRL 194 / M139) (Aspergillus nidulans).